The following is a 298-amino-acid chain: uncharacterized protein (298 aa).

Catalysis depends on charge relay system residues Thr43 and Tyr105. Tyr131 acts as the Proton donor in catalysis. Catalysis depends on Lys159, which acts as the Schiff-base intermediate with substrate.

The protein belongs to the DapA family. In terms of assembly, homotetramer.

The protein localises to the cytoplasm. This is an uncharacterized protein from Pyrococcus furiosus (strain ATCC 43587 / DSM 3638 / JCM 8422 / Vc1).